The following is a 124-amino-acid chain: Protein YebF (124 aa).

The N-terminal stretch at 1–27 (MKTCHIINRVGLSGVALLLTVSFTVSA) is a signal peptide. The YebF/Cmi domain occupies 36 to 123 (KFISCDNLTK…QQNTISYSEL (88 aa)). Residues C40 and C113 are joined by a disulfide bond.

This sequence belongs to the YebF family.

Its subcellular location is the secreted. This chain is Protein YebF, found in Photorhabdus laumondii subsp. laumondii (strain DSM 15139 / CIP 105565 / TT01) (Photorhabdus luminescens subsp. laumondii).